We begin with the raw amino-acid sequence, 279 residues long: Digeranylgeranylglyceryl phosphate synthase (279 aa).

9 helical membrane passes run 16-36, 40-60, 77-99, 104-121, 124-144, 146-166, 192-212, 220-240, and 259-279; these read LIAG…LPPI, LLIF…NDYF, GALS…ILIA, FEAF…YLYA, LKPQ…ITPI, GAIA…AFLV, IVWG…ATII, AGIG…LWAA, and LKIA…TKGV.

Belongs to the UbiA prenyltransferase family. DGGGP synthase subfamily. Mg(2+) serves as cofactor.

The protein resides in the cell membrane. The enzyme catalyses sn-3-O-(geranylgeranyl)glycerol 1-phosphate + (2E,6E,10E)-geranylgeranyl diphosphate = 2,3-bis-O-(geranylgeranyl)-sn-glycerol 1-phosphate + diphosphate. Its pathway is membrane lipid metabolism; glycerophospholipid metabolism. Functionally, prenyltransferase that catalyzes the transfer of the geranylgeranyl moiety of geranylgeranyl diphosphate (GGPP) to the C2 hydroxyl of (S)-3-O-geranylgeranylglyceryl phosphate (GGGP). This reaction is the second ether-bond-formation step in the biosynthesis of archaeal membrane lipids. This Thermococcus sibiricus (strain DSM 12597 / MM 739) protein is Digeranylgeranylglyceryl phosphate synthase.